Here is a 530-residue protein sequence, read N- to C-terminus: MASMRESDTGLWLHNKLGATDELWAPPSIASLLTAAVIDNIRLCFHRLSSAVKLKLLLGTLHLPRRTVDEMKAALMDIIQLATLDSDPWVLMVADILKSFPDTGSLNLDLEEQNPNVQDILGELREKVSECEASAMLPLECQYLNKNALTTLAGPLTPPVKHFQLKRKPKSATLRAELLQKSTETAQQLKRSAGVPFHAKGRGLLRKMDTTTPLKGIPKQAPFRSPTTPSVFSPSGNRTPIPPSRTPLQKERGVKLLDISELNTVGAGREAKRRRKTLDTEVVEKPTKEETVVENATPDYAAGLVSTQKLGSLNSEPTLPSTSYLPSTPSVVPASSYIPSSETPPAPPSREASRPPEEPSAPSPTLPTQFKQRAPMYNSGLSPATPAPAAPTSPLTPTTPPAVTPTAQTPPVAMVAPQTQAPAPVQQQPKKNLSLTREQMFAAQEMFKTANKVTRPEKALILGFMAGSRENPCPEQGDVIQIKLSEHTEDLPKADGQGSTTMLVDTVFEMNYATGQWTRFKKYKPMTNVS.

The HDAg domain occupies 89-248 (WVLMVADILK…TPIPPSRTPL (160 aa)). The interval 125–188 (REKVSECEAS…LQKSTETAQQ (64 aa)) is NELF-C/D-binding. Thr157 bears the Phosphothreonine mark. Positions 189–248 (LKRSAGVPFHAKGRGLLRKMDTTTPLKGIPKQAPFRSPTTPSVFSPSGNRTPIPPSRTPL) are RNAPII-binding. Disordered regions lie at residues 213 to 248 (PLKG…RTPL), 266 to 296 (GAGR…VENA), and 312 to 409 (SLNS…TAQT). 2 positions are modified to phosphoserine: Ser225 and Ser233. The span at 225–238 (SPTTPSVFSPSGNR) shows a compositional bias: polar residues. Position 277 is a phosphothreonine (Thr277). Over residues 277 to 291 (TLDTEVVEKPTKEET) the composition is skewed to basic and acidic residues. Positions 315-341 (SEPTLPSTSYLPSTPSVVPASSYIPSS) are enriched in low complexity. Ser363 is subject to Phosphoserine.

The protein belongs to the NELF-A family. In terms of assembly, the NELF complex is composed of NELFA, NELFB, NELFCD and NELFE; NELFA and NELFCD form a stable subcomplex that binds to the N-terminus of NELFB. In vitro, the NELFA:NELFCD subcomplex binds to ssDNA and ssRNA in a sequence- and structure-dependent manner. Interacts with the RNA polymerase II complex when it is not phosphorylated by P-TEFb. Interacts with NELFB. Ubiquitous. Expressed in brain, heart, spleen, lung, liver, muscle, kidney and testis. Already expressed in 7 dpc embryos.

It is found in the nucleus. In terms of biological role, essential component of the NELF complex, a complex that negatively regulates the elongation of transcription by RNA polymerase II. The NELF complex, which acts via an association with the DSIF complex and causes transcriptional pausing, is counteracted by the P-TEFb kinase complex. The protein is Negative elongation factor A (Nelfa) of Mus musculus (Mouse).